Reading from the N-terminus, the 227-residue chain is Isopentenyl-diphosphate Delta-isomerase 1 (227 aa).

Position 36 (Lys-36) interacts with substrate. 2 residues coordinate Mg(2+): His-40 and His-51. Residues 49–199 (LLHRAFSVFL…EVKLTPWFKI (151 aa)) enclose the Nudix hydrolase domain. Substrate contacts are provided by Arg-70 and Lys-74. Cys-86 is an active-site residue. Residue Ser-87 coordinates substrate. Residues Glu-146 and Glu-148 each contribute to the Mg(2+) site. The active site involves Glu-148. At Lys-176 the chain carries N6-acetyllysine. Positions 225-227 (HRM) match the Microbody targeting signal motif.

This sequence belongs to the IPP isomerase type 1 family. Monomer. Mg(2+) is required as a cofactor.

The protein localises to the peroxisome. The catalysed reaction is isopentenyl diphosphate = dimethylallyl diphosphate. It participates in isoprenoid biosynthesis; dimethylallyl diphosphate biosynthesis; dimethylallyl diphosphate from isopentenyl diphosphate: step 1/1. Catalyzes the 1,3-allylic rearrangement of the homoallylic substrate isopentenyl (IPP) to its highly electrophilic allylic isomer, dimethylallyl diphosphate (DMAPP). The chain is Isopentenyl-diphosphate Delta-isomerase 1 (IDI1) from Mesocricetus auratus (Golden hamster).